A 312-amino-acid chain; its full sequence is Olfactory receptor-like protein COR4 (312 aa).

At 1–26 (MASGNCTTPTTFILSGLTDNPGLQMP) the chain is on the extracellular side. Residue N5 is glycosylated (N-linked (GlcNAc...) asparagine). The helical transmembrane segment at 27–49 (LFMVFLAIYTITLLTNLGLIALI) threads the bilayer. Over 50–57 (SVDLHLQT) the chain is Cytoplasmic. The chain crosses the membrane as a helical span at residues 58–79 (PMYIFLQNLSFTDAAYSTVITP). Topologically, residues 80-100 (KMLATFLEERKTISYIGCILQ) are extracellular. Residues C97 and C179 are joined by a disulfide bond. The chain crosses the membrane as a helical span at residues 101–120 (YFSFVLLTVTESLLLAVMAY). The Cytoplasmic portion of the chain corresponds to 121 to 139 (DRYVAICKPLLYPSIMTKA). Residues 140–164 (VCWRLVKGLYSLAFLNSLVHTSGLL) traverse the membrane as a helical segment. Topologically, residues 165–205 (KLSFCSSNVVNHFFCDNSPLFQISSSSTTLNELLVFIFGSL) are extracellular. A helical membrane pass occupies residues 206 to 226 (FAMSSIITILISYVFIILTVV). Topologically, residues 227 to 239 (RIRSKDGKYKAFS) are cytoplasmic. Residues 240-260 (TCTSHLMAVSLFHGTVIFMYL) traverse the membrane as a helical segment. The Extracellular segment spans residues 261-271 (RPVKLFSLDTD). Residues 272–292 (KIASLFYTVVIPMLNPLIYSW) form a helical membrane-spanning segment. Topologically, residues 293 to 312 (RNKEVKDALRRVIATNVWIH) are cytoplasmic.

Belongs to the G-protein coupled receptor 1 family.

It is found in the cell membrane. Functionally, odorant receptor. In Gallus gallus (Chicken), this protein is Olfactory receptor-like protein COR4 (COR4).